The following is a 357-amino-acid chain: Aspartate carbamoyltransferase catalytic subunit (357 aa).

Polar residues predominate over residues 1–15; sequence MSNSIDSQSLPTVSP. A disordered region spans residues 1–21; that stretch reads MSNSIDSQSLPTVSPTDYARF. The carbamoyl phosphate site is built by Arg-97 and Thr-98. Lys-125 lines the L-aspartate pocket. Carbamoyl phosphate contacts are provided by Arg-147, His-177, and Gln-180. L-aspartate contacts are provided by Arg-211 and Arg-266. Residues Gly-307 and Pro-308 each coordinate carbamoyl phosphate.

It belongs to the aspartate/ornithine carbamoyltransferase superfamily. ATCase family. In terms of assembly, heterododecamer (2C3:3R2) of six catalytic PyrB chains organized as two trimers (C3), and six regulatory PyrI chains organized as three dimers (R2).

It carries out the reaction carbamoyl phosphate + L-aspartate = N-carbamoyl-L-aspartate + phosphate + H(+). It functions in the pathway pyrimidine metabolism; UMP biosynthesis via de novo pathway; (S)-dihydroorotate from bicarbonate: step 2/3. Its function is as follows. Catalyzes the condensation of carbamoyl phosphate and aspartate to form carbamoyl aspartate and inorganic phosphate, the committed step in the de novo pyrimidine nucleotide biosynthesis pathway. In Psychrobacter cryohalolentis (strain ATCC BAA-1226 / DSM 17306 / VKM B-2378 / K5), this protein is Aspartate carbamoyltransferase catalytic subunit.